A 73-amino-acid chain; its full sequence is Crustacean hyperglycemic hormone (73 aa).

Intrachain disulfides connect Cys7/Cys43, Cys23/Cys39, and Cys26/Cys52. Position 73 is a valine amide (Val73).

It belongs to the arthropod CHH/MIH/GIH/VIH hormone family. In terms of tissue distribution, produced by the medulla terminalis X-organ in the eyestalks and transported to the sinus gland where they are stored and released.

The protein resides in the secreted. Its function is as follows. Hormone found in the sinus gland of isopods and decapods which controls the blood sugar level. Has a secretagogue action over the amylase released from the midgut gland. May act as a stress hormone and may be involved in the control of molting and reproduction. The sequence is that of Crustacean hyperglycemic hormone from Jasus lalandii (Cape rock lobster).